The sequence spans 338 residues: Solute carrier family 35 member G3 (338 aa).

The segment at 1-24 (MAGSHPYFNQPDSTHPSPPSAPPS) is disordered. The next 9 helical transmembrane spans lie at 37–57 (TSGL…VGPL), 67–87 (LPSL…ALLL), 105–125 (FFCA…VQVV), 160–180 (CGLL…LWTL), 185–205 (TGVY…ALSL), 221–241 (TVAF…LFVL), 250–270 (LLSW…FTCV), 281–301 (LVCA…YYML), and 305–325 (VAPS…IITA). Positions 49 to 174 (LPAGFVGPLS…CILGLIIIVG (126 aa)) constitute an EamA 1 domain. The EamA 2 domain maps to 272–325 (YAVTKAHPALVCAVLHSEVVVALILQYYMLHETVAPSDIVAAGVVLGSIAIITA).

Belongs to the SLC35G solute transporter family. In terms of tissue distribution, expressed in testis.

Its subcellular location is the membrane. This Homo sapiens (Human) protein is Solute carrier family 35 member G3 (SLC35G3).